Here is a 423-residue protein sequence, read N- to C-terminus: Gamma-glutamyl phosphate reductase (423 aa).

Belongs to the gamma-glutamyl phosphate reductase family.

The protein resides in the cytoplasm. It carries out the reaction L-glutamate 5-semialdehyde + phosphate + NADP(+) = L-glutamyl 5-phosphate + NADPH + H(+). It participates in amino-acid biosynthesis; L-proline biosynthesis; L-glutamate 5-semialdehyde from L-glutamate: step 2/2. In terms of biological role, catalyzes the NADPH-dependent reduction of L-glutamate 5-phosphate into L-glutamate 5-semialdehyde and phosphate. The product spontaneously undergoes cyclization to form 1-pyrroline-5-carboxylate. This is Gamma-glutamyl phosphate reductase from Pseudomonas putida (strain W619).